Here is a 344-residue protein sequence, read N- to C-terminus: Polyhomeotic-like protein 2 (344 aa).

The span at 1 to 23 (MTSGNGSSPVPTAATGNRTQNGE) shows a compositional bias: polar residues. The tract at residues 1 to 28 (MTSGNGSSPVPTAATGNRTQNGENKPPQ) is disordered. An HD1 motif is present at residues 25–53 (KPPQAVVKPQILTHFIEGFVIQEGAQPFP). Residues 114–148 (GDGDPPKLKCELCGRVDFEYKFKRSKRFCSMACAK) form an FCS-type zinc finger. Residues C123, C126, C142, and C146 each contribute to the Zn(2+) site. The disordered stretch occupies residues 165–269 (RSKLQKPTVA…LHSRDPIAMS (105 aa)). Positions 173-183 (VAKHARRRSRK) are enriched in basic residues. The segment covering 216–233 (KLSNSQEDSSRCSDNSSY) has biased composition (polar residues). Positions 234–248 (EEPLSPMSASSSLSR) are enriched in low complexity. The SAM domain occupies 280 to 344 (WNVEDVYDFV…YARISMLKDS (65 aa)).

Component of a PRC1-like complex.

Its subcellular location is the nucleus. Component of a Polycomb group (PcG) multiprotein PRC1-like complex, a complex class required to maintain the transcriptionally repressive state of many genes, including Hox genes, throughout development. PcG PRC1 complex acts via chromatin remodeling and modification of histones; it mediates monoubiquitination of histone H2A 'Lys-119', rendering chromatin heritably changed in its expressibility. This Xenopus laevis (African clawed frog) protein is Polyhomeotic-like protein 2 (phc2).